The chain runs to 147 residues: Large ribosomal subunit protein bL9 (147 aa).

The protein belongs to the bacterial ribosomal protein bL9 family.

Binds to the 23S rRNA. In Caldanaerobacter subterraneus subsp. tengcongensis (strain DSM 15242 / JCM 11007 / NBRC 100824 / MB4) (Thermoanaerobacter tengcongensis), this protein is Large ribosomal subunit protein bL9.